The primary structure comprises 267 residues: Chlorophyll a-b binding protein 3B, chloroplastic (267 aa).

Residues 1–34 constitute a chloroplast transit peptide; the sequence is MAASTMALSSSTFAGKAVKLSPSSSEISGNGRIT. The interval 19–52 is disordered; sequence KLSPSSSEISGNGRITMRKTAAKPKPASSGSPWX. The chain crosses the membrane as a helical span at residues 153–173; sequence LVHAQSILAIWACQVVLMGAV. Chlorophyll b contacts are provided by Val154, Ser158, Gln166, Glu174, Arg177, and Leu183. Lys214, Glu215, Asn218, Arg220, Gln232, His247, and Ala256 together coordinate chlorophyll a. A helical transmembrane segment spans residues 221-241; it reads LAMFSMFGFFVQAIVTGKGPL. Phe263 is a binding site for chlorophyll b.

The protein belongs to the light-harvesting chlorophyll a/b-binding (LHC) protein family. The LHC complex consists of chlorophyll a-b binding proteins. The cofactor is Binds at least 14 chlorophylls (8 Chl-a and 6 Chl-b) and carotenoids such as lutein and neoxanthin.. Post-translationally, photoregulated by reversible phosphorylation of its threonine residues.

It localises to the plastid. The protein localises to the chloroplast thylakoid membrane. The light-harvesting complex (LHC) functions as a light receptor, it captures and delivers excitation energy to photosystems with which it is closely associated. In Solanum lycopersicum (Tomato), this protein is Chlorophyll a-b binding protein 3B, chloroplastic (CAB3B).